A 228-amino-acid chain; its full sequence is Urease accessory protein UreF 1 (228 aa).

It belongs to the UreF family. UreD, UreF and UreG form a complex that acts as a GTP-hydrolysis-dependent molecular chaperone, activating the urease apoprotein by helping to assemble the nickel containing metallocenter of UreC. The UreE protein probably delivers the nickel.

It localises to the cytoplasm. Required for maturation of urease via the functional incorporation of the urease nickel metallocenter. In Brucella canis (strain ATCC 23365 / NCTC 10854 / RM-666), this protein is Urease accessory protein UreF 1.